Consider the following 455-residue polypeptide: MSFLMDSVIMFTSQVLFFGFGWLFFMRQLFKDYEVRQYVVQVVFSITFAFSCTMFELIIFEILGALETSSRYFHWKFNLYVILLVLIFVVPFYIGYFVVSNIRLLQRQKLLFACVVWFTFMYFFWKLGDPFPILSPKHGILSIEQLISRVGVIGVTLMALLSGFGAVNCPYTYMSYFLRNVTESDILALERRLLQTMDMIVSKKKRIAMTRRQMYQRGEDQNKQTGFWGMIKSVTSSPPGSENLSLIQQEVDALEELSRQLFLETVDLQATKERIEYSKTFQGKYFNFLGYFFSIYCVWKIFMATINIVFDRVGKTDPVTRGIEITVNYLGIQFDVKFWSQHISFILVGIIIVTSIRGLLITLTKFFYAISSSKSSNVIVLVLAQIMGMYFVSSVLLMRMSMPLEYRSIVTEVLGELQFNFYHRWFDVIFLVSALSSILFLYLAHKQAPEKHMTP.

Transmembrane regions (helical) follow at residues 46-66, 79-99, 111-131, and 150-170; these read ITFA…LGAL, LYVI…YFVV, LFAC…GDPF, and VGVI…VNCP. N-linked (GlcNAc...) asparagine glycans are attached at residues N180 and N243. The next 4 membrane-spanning stretches (helical) occupy residues 290-310, 343-363, 378-398, and 425-445; these read GYFF…NIVF, ISFI…LITL, VIVL…VLLM, and WFDV…YLAH.

This sequence belongs to the Golgi pH regulator (TC 1.A.38) family. Homotrimer.

Its subcellular location is the golgi apparatus membrane. The catalysed reaction is iodide(out) = iodide(in). It catalyses the reaction chloride(in) = chloride(out). It carries out the reaction bromide(in) = bromide(out). The enzyme catalyses fluoride(in) = fluoride(out). Voltage-gated channel that enables the transfer of anions such as iodide, chloride, bromide and fluoride which may function in counter-ion conductance and participates in Golgi acidification. The polypeptide is Golgi pH regulator (Salmo salar (Atlantic salmon)).